The sequence spans 166 residues: Flagellar protein LafL (166 aa).

A helical membrane pass occupies residues 6–26 (MIAMFIAMIITSALVSAATIM).

This sequence belongs to the FliL family.

The protein resides in the cell inner membrane. Functionally, controls the rotational direction of flagella during chemotaxis. In Vibrio parahaemolyticus serotype O3:K6 (strain RIMD 2210633), this protein is Flagellar protein LafL (lafL).